The chain runs to 351 residues: Cell division protein FtsZ (351 aa).

GTP-binding positions include 31 to 35 (GAGNN), 118 to 120 (GTG), Glu-149, Arg-153, and Asp-197.

It belongs to the FtsZ family. As to quaternary structure, homodimer. Polymerizes to form a dynamic ring structure in a strictly GTP-dependent manner. Interacts directly with several other division proteins. Interacts with FtsA.

It is found in the cytoplasm. Functionally, essential cell division protein that forms a contractile ring structure (Z ring) at the future cell division site. The regulation of the ring assembly controls the timing and the location of cell division. One of the functions of the FtsZ ring is to recruit other cell division proteins to the septum to produce a new cell wall between the dividing cells. Binds GTP and shows GTPase activity. This is Cell division protein FtsZ from Thermotoga maritima (strain ATCC 43589 / DSM 3109 / JCM 10099 / NBRC 100826 / MSB8).